Here is a 427-residue protein sequence, read N- to C-terminus: Inward rectifier potassium channel 2 (427 aa).

Residues 1–81 (MGSVRTNRYS…IFTTCVDIRW (81 aa)) lie on the Cytoplasmic side of the membrane. C76 is subject to S-nitrosocysteine. Residues 82-106 (RWMLVIFCLAFVLSWLFFGCVFWLI) traverse the membrane as a helical segment. Topologically, residues 107–128 (ALLHGDLDASKESKACVSEVNS) are extracellular. An intramembrane region (helical; Pore-forming) is located at residues 129–140 (FTAAFLFSIETQ). Residues 141–147 (TTIGYGF) constitute an intramembrane region (pore-forming). Residues 142 to 147 (TIGYGF) carry the Selectivity filter motif. Residues 148–156 (RCVTDECPI) lie on the Extracellular side of the membrane. Residues 157-178 (AVFMVVFQSIVGCIIDAFIIGA) traverse the membrane as a helical segment. The Cytoplasmic portion of the chain corresponds to 179–427 (VMAKMAKPKK…PRPLRRESEI (249 aa)). The tract at residues 181–208 (AKMAKPKKRNETLVFSHNAVIAMRDGKL) is polyphosphoinositide (PIP2)-binding. The segment at 383–427 (TSKEEEDSENGVPESTSTDSPPGIDLHNQASVPLEPRPLRRESEI) is disordered. The PDZ-binding motif lies at 425 to 427 (SEI).

The protein belongs to the inward rectifier-type potassium channel (TC 1.A.2.1) family. KCNJ2 subfamily. As to quaternary structure, homotetramer. Homomultimeric and heteromultimeric association with KCNJ4/Kir2.3. Can form heteromeric channels with Kir2.6/KCNJ18. Associates, via its PDZ-recognition domain, with a complex containing LIN7A, LIN7B, LIN7C, DLG1, CASK and APBA1. S-nitrosylation increases the open probability and inward rectifying currents. In terms of tissue distribution, prominently expressed in the central nervous system. Also found in other excitable tissues such as heart and skeletal muscle.

The protein localises to the cell membrane. It is found in the sarcolemma. The protein resides in the T-tubule. The enzyme catalyses K(+)(in) = K(+)(out). Activated by phosphatidylinositol 4,5 biphosphate (PtdIns(4,5)P2). In terms of biological role, inward rectifier potassium channels are characterized by a greater tendency to allow potassium to flow into the cell rather than out of it. Their voltage dependence is regulated by the concentration of extracellular potassium; as external potassium is raised, the voltage range of the channel opening shifts to more positive voltages. The inward rectification is mainly due to the blockage of outward current by internal magnesium. Can be blocked by extracellular barium and cesium. Probably participates in establishing action potential waveform and excitability of neuronal and muscle tissues. The polypeptide is Inward rectifier potassium channel 2 (Kcnj2) (Rattus norvegicus (Rat)).